Reading from the N-terminus, the 212-residue chain is MAKITKLEVQKRNKERVNVFLDEDYAFSISAELIYKEGIKVKDSVNSEKLKVLANKDAIIKCREAAIKTIERNLKTEKQVRDKLNLKGYDEDSITKAIDFLKEYNFLDDKDYANKFVKDKLKCQGSNKIRYSLMQKGVSKDVIEEELSSIDKENEKESALILAQKKLNSLRKTEDDTYKISNKLYRFLLSKGYGYDIIKDVVKEAINFELYD.

It belongs to the RecX family.

Its subcellular location is the cytoplasm. Modulates RecA activity. In Clostridium botulinum (strain Eklund 17B / Type B), this protein is Regulatory protein RecX.